The following is a 189-amino-acid chain: MAPAWSLLLALLLLSCNAICSLGCHLPHIHSLANRRVLMLLQQLRRVSPSSCLQDRNDFALPQEALGGSQLQKAQAISVLHEVTQHTSQLFSTEGFGAVWDESLLDKLRAALDQQLTDLQACLRQEEGLRGAPLVKKDSSLAVRKYFHRLTLYLQEKRHSPCAWEVVRAEVMRAFSSSTNLQESFRRKD.

The signal sequence occupies residues 1–23 (MAPAWSLLLALLLLSCNAICSLG). 2 disulfides stabilise this stretch: cysteine 24/cysteine 122 and cysteine 52/cysteine 162.

It belongs to the alpha/beta interferon family.

Its subcellular location is the secreted. Functionally, produced by macrophages, IFN-alpha have antiviral activities. Interferon stimulates the production of two enzymes: a protein kinase and an oligoadenylate synthetase. The polypeptide is Interferon alpha-F (IFNAF) (Bos taurus (Bovine)).